A 146-amino-acid chain; its full sequence is Small ribosomal subunit protein bS6 (146 aa).

Positions 100–146 (QSAMMRKRDDDDRGDRPDRGDRGRGPRPDRPPRRPRDDAAASDEGGF) are disordered. Residues 105 to 138 (RKRDDDDRGDRPDRGDRGRGPRPDRPPRRPRDDA) are compositionally biased toward basic and acidic residues.

The protein belongs to the bacterial ribosomal protein bS6 family.

Functionally, binds together with bS18 to 16S ribosomal RNA. The polypeptide is Small ribosomal subunit protein bS6 (Methylocella silvestris (strain DSM 15510 / CIP 108128 / LMG 27833 / NCIMB 13906 / BL2)).